A 393-amino-acid polypeptide reads, in one-letter code: Small RNA 2'-O-methyltransferase (393 aa).

S-adenosyl-L-methionine-binding residues include Tyr36, Gly55, Asp78, Lys83, Val115, and Ile131. Residues Glu132, Glu135, His136, and His181 each contribute to the Mg(2+) site. Residues 286–307 form a disordered region; the sequence is HLPRRKEQAGERGDKPKDIGGS. The span at 290–305 shows a compositional bias: basic and acidic residues; it reads RKEQAGERGDKPKDIG.

This sequence belongs to the methyltransferase superfamily. HEN1 family. Requires Mg(2+) as cofactor.

The protein resides in the cytoplasm. It catalyses the reaction small RNA 3'-end nucleotide + S-adenosyl-L-methionine = small RNA 3'-end 2'-O-methylnucleotide + S-adenosyl-L-homocysteine + H(+). Its function is as follows. Methyltransferase that adds a 2'-O-methyl group at the 3'-end of piRNAs, a class of 24 to 30 nucleotide RNAs that are generated by a Dicer-independent mechanism and are primarily derived from transposons and other repeated sequence elements. This probably protects the 3'-end of piRNAs from uridylation activity and subsequent degradation. Stabilization of piRNAs is essential for gametogenesis. This is Small RNA 2'-O-methyltransferase (HENMT1) from Homo sapiens (Human).